The following is an 89-amino-acid chain: Small ribosomal subunit protein uS15 (89 aa).

It belongs to the universal ribosomal protein uS15 family. Part of the 30S ribosomal subunit. Forms a bridge to the 50S subunit in the 70S ribosome, contacting the 23S rRNA.

Its function is as follows. One of the primary rRNA binding proteins, it binds directly to 16S rRNA where it helps nucleate assembly of the platform of the 30S subunit by binding and bridging several RNA helices of the 16S rRNA. In terms of biological role, forms an intersubunit bridge (bridge B4) with the 23S rRNA of the 50S subunit in the ribosome. The polypeptide is Small ribosomal subunit protein uS15 (Caulobacter vibrioides (strain NA1000 / CB15N) (Caulobacter crescentus)).